The chain runs to 439 residues: ATP-dependent protease ATPase subunit HslU (439 aa).

ATP contacts are provided by residues Ile-17, 59–64 (GVGKTE), Asp-251, Glu-317, and Arg-389.

Belongs to the ClpX chaperone family. HslU subfamily. As to quaternary structure, a double ring-shaped homohexamer of HslV is capped on each side by a ring-shaped HslU homohexamer. The assembly of the HslU/HslV complex is dependent on binding of ATP.

The protein resides in the cytoplasm. ATPase subunit of a proteasome-like degradation complex; this subunit has chaperone activity. The binding of ATP and its subsequent hydrolysis by HslU are essential for unfolding of protein substrates subsequently hydrolyzed by HslV. HslU recognizes the N-terminal part of its protein substrates and unfolds these before they are guided to HslV for hydrolysis. This Campylobacter jejuni subsp. jejuni serotype O:23/36 (strain 81-176) protein is ATP-dependent protease ATPase subunit HslU.